A 231-amino-acid polypeptide reads, in one-letter code: Endonuclease NucS (231 aa).

The protein belongs to the NucS endonuclease family.

Its subcellular location is the cytoplasm. In terms of biological role, cleaves both 3' and 5' ssDNA extremities of branched DNA structures. The sequence is that of Endonuclease NucS from Beutenbergia cavernae (strain ATCC BAA-8 / DSM 12333 / CCUG 43141 / JCM 11478 / NBRC 16432 / NCIMB 13614 / HKI 0122).